The sequence spans 373 residues: Probable tRNA sulfurtransferase (373 aa).

In terms of domain architecture, THUMP spans 54–158 (NKNIEELSKV…NDVAYFYHKI (105 aa)). Residues 176 to 177 (LF), 201 to 202 (NF), Lys256, Gly278, and Gln287 contribute to the ATP site.

The protein belongs to the ThiI family.

The protein localises to the cytoplasm. It carries out the reaction [ThiI sulfur-carrier protein]-S-sulfanyl-L-cysteine + a uridine in tRNA + 2 reduced [2Fe-2S]-[ferredoxin] + ATP + H(+) = [ThiI sulfur-carrier protein]-L-cysteine + a 4-thiouridine in tRNA + 2 oxidized [2Fe-2S]-[ferredoxin] + AMP + diphosphate. The enzyme catalyses [ThiS sulfur-carrier protein]-C-terminal Gly-Gly-AMP + S-sulfanyl-L-cysteinyl-[cysteine desulfurase] + AH2 = [ThiS sulfur-carrier protein]-C-terminal-Gly-aminoethanethioate + L-cysteinyl-[cysteine desulfurase] + A + AMP + 2 H(+). Its pathway is cofactor biosynthesis; thiamine diphosphate biosynthesis. In terms of biological role, catalyzes the ATP-dependent transfer of a sulfur to tRNA to produce 4-thiouridine in position 8 of tRNAs, which functions as a near-UV photosensor. Also catalyzes the transfer of sulfur to the sulfur carrier protein ThiS, forming ThiS-thiocarboxylate. This is a step in the synthesis of thiazole, in the thiamine biosynthesis pathway. The sulfur is donated as persulfide by IscS. This Saccharolobus islandicus (strain M.14.25 / Kamchatka #1) (Sulfolobus islandicus) protein is Probable tRNA sulfurtransferase.